The sequence spans 251 residues: Phosphate import ATP-binding protein PstB 2 (251 aa).

In terms of domain architecture, ABC transporter spans isoleucine 5–leucine 246. Glycine 37 to serine 44 serves as a coordination point for ATP.

The protein belongs to the ABC transporter superfamily. Phosphate importer (TC 3.A.1.7) family. The complex is composed of two ATP-binding proteins (PstB), two transmembrane proteins (PstC and PstA) and a solute-binding protein (PstS).

Its subcellular location is the cell membrane. The catalysed reaction is phosphate(out) + ATP + H2O = ADP + 2 phosphate(in) + H(+). Its function is as follows. Part of the ABC transporter complex PstSACB involved in phosphate import. Responsible for energy coupling to the transport system. This Ligilactobacillus salivarius (strain UCC118) (Lactobacillus salivarius) protein is Phosphate import ATP-binding protein PstB 2.